Consider the following 205-residue polypeptide: High frequency lysogenization protein HflD homolog (205 aa).

This sequence belongs to the HflD family.

It localises to the cytoplasm. It is found in the cell inner membrane. The sequence is that of High frequency lysogenization protein HflD homolog from Photobacterium profundum (strain SS9).